Consider the following 95-residue polypeptide: Aspartyl/glutamyl-tRNA(Asn/Gln) amidotransferase subunit C (95 aa).

Belongs to the GatC family. Heterotrimer of A, B and C subunits.

The catalysed reaction is L-glutamyl-tRNA(Gln) + L-glutamine + ATP + H2O = L-glutaminyl-tRNA(Gln) + L-glutamate + ADP + phosphate + H(+). The enzyme catalyses L-aspartyl-tRNA(Asn) + L-glutamine + ATP + H2O = L-asparaginyl-tRNA(Asn) + L-glutamate + ADP + phosphate + 2 H(+). Allows the formation of correctly charged Asn-tRNA(Asn) or Gln-tRNA(Gln) through the transamidation of misacylated Asp-tRNA(Asn) or Glu-tRNA(Gln) in organisms which lack either or both of asparaginyl-tRNA or glutaminyl-tRNA synthetases. The reaction takes place in the presence of glutamine and ATP through an activated phospho-Asp-tRNA(Asn) or phospho-Glu-tRNA(Gln). The protein is Aspartyl/glutamyl-tRNA(Asn/Gln) amidotransferase subunit C of Azotobacter vinelandii (strain DJ / ATCC BAA-1303).